The following is a 649-amino-acid chain: PTS system mannitol-specific EIICBA component (649 aa).

The region spanning 13-342 (FGRFLSNMVM…LLMKAQTSTE (330 aa)) is the PTS EIIC type-2 domain. 6 helical membrane-spanning segments follow: residues 25–46 (IGAF…WVPN), 51–71 (SLVG…TGGK), 135–156 (SAGI…PFVK), 166–186 (VNFL…EPAK), 274–293 (AIAG…AGLV), and 314–335 (LGVV…ALLM). A PTS EIIB type-2 domain is found at 384–475 (QSIIVACDAG…LVTQLLAAKR (92 aa)). Residue cysteine 390 is the Phosphocysteine intermediate; for EIIB activity of the active site. Position 390 is a phosphocysteine; by EIIA (cysteine 390). Residues 504–646 (FQLQKENIHL…SDVLSILATS (143 aa)) form the PTS EIIA type-2 domain. Residue histidine 564 is the Tele-phosphohistidine intermediate; for EIIA activity of the active site. Histidine 564 bears the Phosphohistidine; by HPr mark.

As to quaternary structure, homodimer. Post-translationally, an intramolecular phosphotransfer takes places between His-564 and Cys-390.

The protein resides in the cell inner membrane. It carries out the reaction D-mannitol(out) + N(pros)-phospho-L-histidyl-[protein] = D-mannitol 1-phosphate(in) + L-histidyl-[protein]. Its function is as follows. The phosphoenolpyruvate-dependent sugar phosphotransferase system (sugar PTS), a major carbohydrate active transport system, catalyzes the phosphorylation of incoming sugar substrates concomitantly with their translocation across the cell membrane. This system is involved in D-mannitol transport. This chain is PTS system mannitol-specific EIICBA component (mtlA), found in Vibrio cholerae serotype O1 (strain ATCC 39315 / El Tor Inaba N16961).